We begin with the raw amino-acid sequence, 88 residues long: uncharacterized protein (88 aa).

Helical transmembrane passes span 5 to 25 (AIPF…LLFV) and 36 to 56 (CYYL…VMIF).

It is found in the membrane. This is an uncharacterized protein from Saccharomyces cerevisiae (strain ATCC 204508 / S288c) (Baker's yeast).